The following is a 308-amino-acid chain: tRNA dimethylallyltransferase (308 aa).

Residue 14-21 (GPTASGKT) coordinates ATP. A substrate-binding site is contributed by 16–21 (TASGKT). Interaction with substrate tRNA regions lie at residues 39–42 (DSAL), 163–167 (QRLSR), and 244–249 (RCVGYR).

This sequence belongs to the IPP transferase family. Monomer. Mg(2+) is required as a cofactor.

It carries out the reaction adenosine(37) in tRNA + dimethylallyl diphosphate = N(6)-dimethylallyladenosine(37) in tRNA + diphosphate. Functionally, catalyzes the transfer of a dimethylallyl group onto the adenine at position 37 in tRNAs that read codons beginning with uridine, leading to the formation of N6-(dimethylallyl)adenosine (i(6)A). The sequence is that of tRNA dimethylallyltransferase from Shewanella oneidensis (strain ATCC 700550 / JCM 31522 / CIP 106686 / LMG 19005 / NCIMB 14063 / MR-1).